Here is a 463-residue protein sequence, read N- to C-terminus: Glycine--tRNA ligase (463 aa).

Substrate is bound by residues R98 and E174. Residues 206–208, 216–221, 290–291, and 334–337 contribute to the ATP site; these read RNE, FRTREF, EL, and GADR. 221-225 contacts substrate; sequence FEQME. 330-334 contacts substrate; it reads EPSLG.

Belongs to the class-II aminoacyl-tRNA synthetase family. As to quaternary structure, homodimer.

The protein localises to the cytoplasm. The catalysed reaction is tRNA(Gly) + glycine + ATP = glycyl-tRNA(Gly) + AMP + diphosphate. Its function is as follows. Catalyzes the attachment of glycine to tRNA(Gly). This Staphylococcus aureus (strain bovine RF122 / ET3-1) protein is Glycine--tRNA ligase.